A 278-amino-acid chain; its full sequence is Bis(5'-nucleosyl)-tetraphosphatase, symmetrical (278 aa).

It belongs to the Ap4A hydrolase family.

It carries out the reaction P(1),P(4)-bis(5'-adenosyl) tetraphosphate + H2O = 2 ADP + 2 H(+). Its function is as follows. Hydrolyzes diadenosine 5',5'''-P1,P4-tetraphosphate to yield ADP. The polypeptide is Bis(5'-nucleosyl)-tetraphosphatase, symmetrical (Methylococcus capsulatus (strain ATCC 33009 / NCIMB 11132 / Bath)).